We begin with the raw amino-acid sequence, 555 residues long: 1,3-beta-glucanosyltransferase GAS2 (555 aa).

A signal peptide spans 1–24; sequence MNKKQNFYAAIIVAIFLCLQLSHG. A disulfide bond links C89 and C118. Residues Y107, 134–142, N175, E176, D217, and R222 each bind (1,3-beta-D-glucosyl)n; that span reads SEPDISINR. Residue E176 is the Proton donor of the active site. 6 cysteine pairs are disulfide-bonded: C231–C367, C247–C278, C390–C442, C392–C489, C399–C466, and C419–C424. E275 acts as the Nucleophile in catalysis. Y307 is a binding site for (1,3-beta-D-glucosyl)n. N498 carries N-linked (GlcNAc...) asparagine glycosylation. D531 is lipidated: GPI-anchor amidated aspartate. A propeptide spans 532-555 (removed in mature form); that stretch reads GTIAFKTSGFVILLISMIAAGILL.

It belongs to the glycosyl hydrolase 72 family. N-glycosylated.

It localises to the cell membrane. Functionally, splits internally a 1,3-beta-glucan molecule and transfers the newly generated reducing end (the donor) to the non-reducing end of another 1,3-beta-glucan molecule (the acceptor) forming a 1,3-beta linkage, resulting in the elongation of 1,3-beta-glucan chains in the cell wall. Involved in spore wall assembly. The protein is 1,3-beta-glucanosyltransferase GAS2 (GAS2) of Saccharomyces cerevisiae (strain ATCC 204508 / S288c) (Baker's yeast).